Consider the following 393-residue polypeptide: tRNA(Met) cytidine acetate ligase (393 aa).

ATP-binding residues include Gly81, Asn142, and Arg167.

Belongs to the TmcAL family.

It localises to the cytoplasm. It catalyses the reaction cytidine(34) in elongator tRNA(Met) + acetate + ATP = N(4)-acetylcytidine(34) in elongator tRNA(Met) + AMP + diphosphate. Its function is as follows. Catalyzes the formation of N(4)-acetylcytidine (ac(4)C) at the wobble position of elongator tRNA(Met), using acetate and ATP as substrates. First activates an acetate ion to form acetyladenylate (Ac-AMP) and then transfers the acetyl group to tRNA to form ac(4)C34. The chain is tRNA(Met) cytidine acetate ligase from Bacillus cytotoxicus (strain DSM 22905 / CIP 110041 / 391-98 / NVH 391-98).